A 233-amino-acid chain; its full sequence is uncharacterized protein (233 aa).

7 N-linked (GlcNAc...) asparagine; by host glycosylation sites follow: Asn-58, Asn-77, Asn-93, Asn-102, Asn-110, Asn-120, and Asn-155. Positions 102 to 124 (NSSTTTTTNASSSDSSMYNTTRS) are enriched in low complexity. The interval 102-132 (NSSTTTTTNASSSDSSMYNTTRSTQRRVTYD) is disordered. The helical transmembrane segment at 168–188 (FSLLQWVLVAALAFFMYYFLW) threads the bilayer.

The protein belongs to the ascovirus HvAv ORF58 family.

Its subcellular location is the membrane. This is an uncharacterized protein from Trichoplusia ni ascovirus 2c (TnAV-2c).